The sequence spans 922 residues: Coronin-7 (922 aa).

WD repeat units lie at residues 75–115 (CHSD…EALP), 124–163 (PEEL…HLTE), 166–205 (AHKD…QASQ), and 209–253 (AHEN…SALA). Residues 386–462 (NPAHRPHPRF…TSPSQRSLQS (77 aa)) are disordered. Residues 423–456 (SEGFSSPSSLVSPSTPSSLGLSLSSTSGIGTSPS) show a composition bias toward low complexity. Phosphoserine is present on residues serine 459 and serine 462. Lysine 469 is covalently cross-linked (Glycyl lysine isopeptide (Lys-Gly) (interchain with G-Cter in ubiquitin)). WD repeat units follow at residues 539–579 (QNGA…LKNV), 589–629 (GHTE…EQLR), 632–671 (GHQD…LPLQ), and 725–765 (DVAP…PFFL). The disordered stretch occupies residues 854-922 (LQPPGMTPVS…FEGVDEDEWD (69 aa)). Threonine 874 carries the post-translational modification Phosphothreonine. Over residues 881-893 (LEEKSDQQKKEEL) the composition is skewed to basic and acidic residues. Serine 912 carries the post-translational modification Phosphoserine.

The protein belongs to the WD repeat coronin family. Interacts with clathrin adapter AP1 complex. This interaction takes place at Golgi membranes and not AP1-positive endosomal membranes. Interacts (when ubiquitinated at Lys-469) with EPS15. Post-translationally, the membrane-associated form is phosphorylated on tyrosine residues. Ubiquitinated via 'Lys-33'-linked ubiquitin chains by the BCR(KLHL20) E3 ubiquitin ligase complex: 'Lys-33'-linked ubiquitination promotes interaction with EPS15 and facilitates actin polymerization at the trans-Golgi network, thereby facilitating post-Golgi trafficking. Deubiquitinated by ZRANB1/TRABID.

Its subcellular location is the golgi apparatus membrane. It localises to the golgi apparatus. The protein resides in the trans-Golgi network. It is found in the cytoplasmic vesicle. The protein localises to the cytoplasm. Its subcellular location is the cytosol. Its function is as follows. F-actin regulator involved in anterograde Golgi to endosome transport: upon ubiquitination via 'Lys-33'-linked ubiquitin chains by the BCR(KLHL20) E3 ubiquitin ligase complex, interacts with EPS15 and localizes to the trans-Golgi network, where it promotes actin polymerization, thereby facilitating post-Golgi trafficking. May play a role in the maintenance of the Golgi apparatus morphology. The protein is Coronin-7 (Coro7) of Rattus norvegicus (Rat).